A 61-amino-acid polypeptide reads, in one-letter code: Insect toxin LqhIT5 (61 aa).

Residues 1–61 (DGYIRGGDGC…EWKYETNTCG (61 aa)) form the LCN-type CS-alpha/beta domain. 4 cysteine pairs are disulfide-bonded: Cys-10–Cys-60, Cys-14–Cys-35, Cys-21–Cys-42, and Cys-25–Cys-44.

This sequence belongs to the long (4 C-C) scorpion toxin superfamily. Sodium channel inhibitor family. Beta subfamily. In terms of tissue distribution, expressed by the venom gland.

It localises to the secreted. Functionally, excitatory insect beta-toxins induce a spastic paralysis. They bind voltage-independently at site-4 of sodium channels (Nav) and shift the voltage of activation toward more negative potentials thereby affecting sodium channel activation and promoting spontaneous and repetitive firing. This toxin is active only on insects. It operates by inducing a fast contraction paralysis without depressant activity. It is more similar to the excitatory toxins in its mode of action and the depressant toxins in its primary structure. The chain is Insect toxin LqhIT5 from Leiurus hebraeus (Hebrew deathstalker scorpion).